Reading from the N-terminus, the 300-residue chain is N-acetylmannosamine kinase (300 aa).

ATP is bound by residues 5 to 12 (ALDIGGTK) and 132 to 139 (GVGGGIVL). 4 residues coordinate Zn(2+): His-156, Cys-166, Cys-168, and Cys-173.

The protein belongs to the ROK (NagC/XylR) family. NanK subfamily. Homodimer.

The catalysed reaction is an N-acyl-D-mannosamine + ATP = an N-acyl-D-mannosamine 6-phosphate + ADP + H(+). It participates in amino-sugar metabolism; N-acetylneuraminate degradation; D-fructose 6-phosphate from N-acetylneuraminate: step 2/5. Catalyzes the phosphorylation of N-acetylmannosamine (ManNAc) to ManNAc-6-P. The sequence is that of N-acetylmannosamine kinase from Haemophilus influenzae (strain PittGG).